The chain runs to 557 residues: Dihydroxy-acid dehydratase (557 aa).

A Mg(2+)-binding site is contributed by Asp78. Cys119 contacts [2Fe-2S] cluster. Asp120 and Lys121 together coordinate Mg(2+). An N6-carboxylysine modification is found at Lys121. Residue Cys192 participates in [2Fe-2S] cluster binding. Residue Glu442 participates in Mg(2+) binding. The active-site Proton acceptor is Ser468.

It belongs to the IlvD/Edd family. In terms of assembly, homodimer. The cofactor is [2Fe-2S] cluster. Mg(2+) is required as a cofactor.

It carries out the reaction (2R)-2,3-dihydroxy-3-methylbutanoate = 3-methyl-2-oxobutanoate + H2O. The catalysed reaction is (2R,3R)-2,3-dihydroxy-3-methylpentanoate = (S)-3-methyl-2-oxopentanoate + H2O. Its pathway is amino-acid biosynthesis; L-isoleucine biosynthesis; L-isoleucine from 2-oxobutanoate: step 3/4. The protein operates within amino-acid biosynthesis; L-valine biosynthesis; L-valine from pyruvate: step 3/4. Its function is as follows. Functions in the biosynthesis of branched-chain amino acids. Catalyzes the dehydration of (2R,3R)-2,3-dihydroxy-3-methylpentanoate (2,3-dihydroxy-3-methylvalerate) into 2-oxo-3-methylpentanoate (2-oxo-3-methylvalerate) and of (2R)-2,3-dihydroxy-3-methylbutanoate (2,3-dihydroxyisovalerate) into 2-oxo-3-methylbutanoate (2-oxoisovalerate), the penultimate precursor to L-isoleucine and L-valine, respectively. The protein is Dihydroxy-acid dehydratase of Bacillus cereus (strain ATCC 10987 / NRS 248).